We begin with the raw amino-acid sequence, 311 residues long: Dehydrogenase/reductase SDR family member 7C (311 aa).

Positions 1–18 are cleaved as a signal peptide; it reads MGIMAVLMLPLLLLGVSG. NAD(+) contacts are provided by S47, L49, Y191, K195, and S226. Y191 functions as the Proton acceptor in the catalytic mechanism.

Belongs to the short-chain dehydrogenases/reductases (SDR) family. Expressed in skeletal muscle, cardiac muscle and skin.

It is found in the sarcoplasmic reticulum membrane. It catalyses the reaction all-trans-retinol + NAD(+) = all-trans-retinal + NADH + H(+). NADH-dependent oxidoreductase which catalyzes the oxidation of all-trans-retinol to all-trans-retinal. Plays a role in the regulation of cardiac and skeletal muscle metabolic functions. Maintains Ca(2+) intracellular homeostasis by repressing Ca(2+) release from the sarcoplasmic reticulum (SR) in myotubes, possibly through local alternations in NAD/NADH or retinol/retinal. Also plays a role in Ca(2+) homeostasis by controlling Ca(2+) overload in the cytosol and the SR in myotubes. Involved in glucose uptake into skeletal muscles and muscle performance by activating PI3K and mTORC2-mediated AKT1 phosphorylation signaling pathways, possibly through the action of its downstream catalytic product all-trans-retinoic acid. The chain is Dehydrogenase/reductase SDR family member 7C from Rattus norvegicus (Rat).